The sequence spans 74 residues: Exodeoxyribonuclease 7 small subunit (74 aa).

This sequence belongs to the XseB family. In terms of assembly, heterooligomer composed of large and small subunits.

It localises to the cytoplasm. The enzyme catalyses Exonucleolytic cleavage in either 5'- to 3'- or 3'- to 5'-direction to yield nucleoside 5'-phosphates.. Bidirectionally degrades single-stranded DNA into large acid-insoluble oligonucleotides, which are then degraded further into small acid-soluble oligonucleotides. This Synechococcus elongatus (strain ATCC 33912 / PCC 7942 / FACHB-805) (Anacystis nidulans R2) protein is Exodeoxyribonuclease 7 small subunit.